Here is a 484-residue protein sequence, read N- to C-terminus: Glycogen synthase (484 aa).

Lys15 contacts ADP-alpha-D-glucose.

This sequence belongs to the glycosyltransferase 1 family. Bacterial/plant glycogen synthase subfamily.

The catalysed reaction is [(1-&gt;4)-alpha-D-glucosyl](n) + ADP-alpha-D-glucose = [(1-&gt;4)-alpha-D-glucosyl](n+1) + ADP + H(+). The protein operates within glycan biosynthesis; glycogen biosynthesis. Functionally, synthesizes alpha-1,4-glucan chains using ADP-glucose. The chain is Glycogen synthase from Geotalea daltonii (strain DSM 22248 / JCM 15807 / FRC-32) (Geobacter daltonii).